The chain runs to 539 residues: Probable malate:quinone oxidoreductase 3 (539 aa).

The tract at residues 516–539 (LEPPVSPQRPESIRPADSQGVASR) is disordered.

It belongs to the MQO family. FAD serves as cofactor.

It carries out the reaction (S)-malate + a quinone = a quinol + oxaloacetate. Its pathway is carbohydrate metabolism; tricarboxylic acid cycle; oxaloacetate from (S)-malate (quinone route): step 1/1. This Pseudomonas putida (strain ATCC 47054 / DSM 6125 / CFBP 8728 / NCIMB 11950 / KT2440) protein is Probable malate:quinone oxidoreductase 3.